We begin with the raw amino-acid sequence, 165 residues long: PTS system glucose-specific EIIA component (165 aa).

Residues 34–138 (DPVFAQKMMG…SSITPIIISN (105 aa)) form the PTS EIIA type-1 domain. Positions 71 and 86 each coordinate Zn(2+). The active-site Tele-phosphohistidine intermediate; for EIIA activity is the histidine 86. Histidine 86 bears the Phosphohistidine; by HPr mark.

In terms of assembly, heterodimer with glycerol kinase (glpk). The cofactor is Zn(2+).

It is found in the cytoplasm. Its function is as follows. The phosphoenolpyruvate-dependent sugar phosphotransferase system (sugar PTS), a major carbohydrate active transport system, catalyzes the phosphorylation of incoming sugar substrates concomitantly with their translocation across the cell membrane. The enzyme II complex composed of PtsG and Crr is involved in glucose transport. This is PTS system glucose-specific EIIA component (crr) from Oceanobacillus iheyensis (strain DSM 14371 / CIP 107618 / JCM 11309 / KCTC 3954 / HTE831).